Here is a 184-residue protein sequence, read N- to C-terminus: ATP synthase subunit b, chloroplastic (184 aa).

A helical membrane pass occupies residues 26 to 48 (ILATNLINLSVVLGVLIFFGKGV).

Belongs to the ATPase B chain family. In terms of assembly, F-type ATPases have 2 components, F(1) - the catalytic core - and F(0) - the membrane proton channel. F(1) has five subunits: alpha(3), beta(3), gamma(1), delta(1), epsilon(1). F(0) has four main subunits: a(1), b(1), b'(1) and c(10-14). The alpha and beta chains form an alternating ring which encloses part of the gamma chain. F(1) is attached to F(0) by a central stalk formed by the gamma and epsilon chains, while a peripheral stalk is formed by the delta, b and b' chains.

The protein resides in the plastid. Its subcellular location is the chloroplast thylakoid membrane. In terms of biological role, f(1)F(0) ATP synthase produces ATP from ADP in the presence of a proton or sodium gradient. F-type ATPases consist of two structural domains, F(1) containing the extramembraneous catalytic core and F(0) containing the membrane proton channel, linked together by a central stalk and a peripheral stalk. During catalysis, ATP synthesis in the catalytic domain of F(1) is coupled via a rotary mechanism of the central stalk subunits to proton translocation. Its function is as follows. Component of the F(0) channel, it forms part of the peripheral stalk, linking F(1) to F(0). The polypeptide is ATP synthase subunit b, chloroplastic (Calycanthus floridus var. glaucus (Eastern sweetshrub)).